A 157-amino-acid polypeptide reads, in one-letter code: Cyclic pyranopterin monophosphate synthase (157 aa).

Residues 74–76 and 112–113 contribute to the substrate site; these read MCH and ME. Asp127 is a catalytic residue.

It belongs to the MoaC family. In terms of assembly, homohexamer; trimer of dimers.

The enzyme catalyses (8S)-3',8-cyclo-7,8-dihydroguanosine 5'-triphosphate = cyclic pyranopterin phosphate + diphosphate. Its pathway is cofactor biosynthesis; molybdopterin biosynthesis. Functionally, catalyzes the conversion of (8S)-3',8-cyclo-7,8-dihydroguanosine 5'-triphosphate to cyclic pyranopterin monophosphate (cPMP). The chain is Cyclic pyranopterin monophosphate synthase from Campylobacter jejuni (strain RM1221).